The following is a 1202-amino-acid chain: Phospholipid-transporting ATPase 10 (1202 aa).

At methionine 1–phenylalanine 73 the chain is on the cytoplasmic side. A helical transmembrane segment spans residues proline 74–leucine 95. Over serine 96–aspartate 99 the chain is Extracellular. A helical membrane pass occupies residues leucine 100–lysine 122. Topologically, residues glutamate 123–isoleucine 305 are cytoplasmic. Residues isoleucine 306–glutamate 327 traverse the membrane as a helical segment. Residues threonine 328–histidine 364 lie on the Extracellular side of the membrane. Residues phenylalanine 365 to valine 382 traverse the membrane as a helical segment. The Cytoplasmic portion of the chain corresponds to serine 383–alanine 920. Catalysis depends on aspartate 430, which acts as the 4-aspartylphosphate intermediate. Positions 865 and 869 each coordinate Mg(2+). The chain crosses the membrane as a helical span at residues serine 921–tyrosine 940. At glutamate 941–aspartate 954 the chain is on the extracellular side. The chain crosses the membrane as a helical span at residues tryptophan 955–valine 974. Over phenylalanine 975–arginine 1004 the chain is Cytoplasmic. A helical transmembrane segment spans residues isoleucine 1005–leucine 1027. Topologically, residues lysine 1028–glycine 1040 are extracellular. Residues arginine 1041–serine 1063 traverse the membrane as a helical segment. The Cytoplasmic segment spans residues isoleucine 1064–tryptophan 1069. A helical transmembrane segment spans residues valine 1070–glycine 1090. Residues alanine 1091 to alanine 1107 lie on the Extracellular side of the membrane. Residues leucine 1108 to tyrosine 1132 form a helical membrane-spanning segment. At lysine 1133 to valine 1202 the chain is on the cytoplasmic side.

It belongs to the cation transport ATPase (P-type) (TC 3.A.3) family. Type IV subfamily.

It localises to the cell membrane. It carries out the reaction ATP + H2O + phospholipidSide 1 = ADP + phosphate + phospholipidSide 2.. Functionally, involved in transport of phospholipids. The polypeptide is Phospholipid-transporting ATPase 10 (Arabidopsis thaliana (Mouse-ear cress)).